Consider the following 316-residue polypeptide: tRNA dimethylallyltransferase (316 aa).

ATP is bound at residue 17–24 (GPTASGKT). 19-24 (TASGKT) serves as a coordination point for substrate. Interaction with substrate tRNA regions lie at residues 42–45 (DSAL), 166–170 (QRLSR), 247–252 (RCVGYR), and 280–287 (KRQITWLR).

This sequence belongs to the IPP transferase family. Monomer. It depends on Mg(2+) as a cofactor.

It carries out the reaction adenosine(37) in tRNA + dimethylallyl diphosphate = N(6)-dimethylallyladenosine(37) in tRNA + diphosphate. Its function is as follows. Catalyzes the transfer of a dimethylallyl group onto the adenine at position 37 in tRNAs that read codons beginning with uridine, leading to the formation of N6-(dimethylallyl)adenosine (i(6)A). This Cronobacter sakazakii (strain ATCC BAA-894) (Enterobacter sakazakii) protein is tRNA dimethylallyltransferase.